Consider the following 754-residue polypeptide: ATP-dependent RNA helicase DRS1 (754 aa).

Disordered stretches follow at residues 1–61 (MVVG…NLDE) and 119–227 (GLVK…GDEA). Positions 19 to 34 (DSEDDVPILDSSDDEK) are enriched in acidic residues. Residues 40-51 (TTKKRKGKNNKK) are compositionally biased toward basic residues. Positions 124 to 142 (AHIDSKQEEETEKEKVEKE) are enriched in basic and acidic residues. Composition is skewed to acidic residues over residues 167-193 (NQSEEEEEEEEEEEEEEEEEEEEQEEM) and 202-211 (DEIDEEDDSE). A Phosphoserine modification is found at serine 210. The short motif at 233–261 (ENFNSLSLSRPVLKGLASLGYVKPSPIQS) is the Q motif element. One can recognise a Helicase ATP-binding domain in the interval 264–439 (IPIALLGKDI…SLSLKKPVRI (176 aa)). 277 to 284 (AVTGSGKT) lines the ATP pocket. The DEAD box motif lies at 387 to 390 (DEAD). Residues 450 to 641 (KLTQEFVRIR…SMNDTIEDIL (192 aa)) form the Helicase C-terminal domain. Residues 623–669 (IEETNKLVESMNDTIEDILVEEKEEKEILRAEMQLRKGENMLKHKKE) adopt a coiled-coil conformation. The interval 675 to 754 (RRTWFQSESD…NKKKGFKSRR (80 aa)) is disordered. Positions 696–707 (RNKKVTNSKKRK) are enriched in basic residues. The segment covering 724–736 (TKTDRIADQERTF) has biased composition (basic and acidic residues). A compositionally biased stretch (basic residues) spans 737–754 (KKQKSTNSNKKKGFKSRR).

It belongs to the DEAD box helicase family. DDX27/DRS1 subfamily. Interacts with RRP1 and associates with pre-ribosomal particles.

The protein localises to the nucleus. Its subcellular location is the nucleolus. It carries out the reaction ATP + H2O = ADP + phosphate + H(+). Functionally, ATP-binding RNA helicase involved in ribosome assembly. The chain is ATP-dependent RNA helicase DRS1 (DRS1) from Saccharomyces cerevisiae (strain YJM789) (Baker's yeast).